Consider the following 248-residue polypeptide: MALLEICCYSMECALTAQQNGADRVELCAAPKEGGLTPSLGVLKSVRQWVTIPVHPIIRPRGGDFCYSDGEFAAILEDVRTVRELGFPGLVTGVLDVDGNVDMPRMEKIMAAAGPLAVTFHRAFDMCANPLNTLSNLAELGIARVLTSGQKSDALQGLSKIMELIAHRDAPIIMAGAGVRAENLHHFLDAGVLEVHSSAGAWQASPMRYRNQGLSMSSDAHADEYSRYVVDGAAVAEMKGIIERHQAK.

It belongs to the CutC family. Homodimer.

Its subcellular location is the cytoplasm. This Shigella boydii serotype 4 (strain Sb227) protein is PF03932 family protein CutC.